Consider the following 287-residue polypeptide: ATP synthase gamma chain (287 aa).

Belongs to the ATPase gamma chain family. As to quaternary structure, F-type ATPases have 2 components, CF(1) - the catalytic core - and CF(0) - the membrane proton channel. CF(1) has five subunits: alpha(3), beta(3), gamma(1), delta(1), epsilon(1). CF(0) has three main subunits: a, b and c.

It is found in the cell membrane. In terms of biological role, produces ATP from ADP in the presence of a proton gradient across the membrane. The gamma chain is believed to be important in regulating ATPase activity and the flow of protons through the CF(0) complex. This chain is ATP synthase gamma chain, found in Geobacillus stearothermophilus (Bacillus stearothermophilus).